We begin with the raw amino-acid sequence, 567 residues long: Restriction of telomere capping protein 5 (567 aa).

Residues 289–515 enclose the TLDc domain; the sequence is KVMTPALLAQ…IQDVEVWGCG (227 aa).

Belongs to the RTC5 family.

The protein resides in the cytoplasm. Functionally, may be involved in a process influencing telomere capping. The chain is Restriction of telomere capping protein 5 (RTC5) from Saccharomyces cerevisiae (strain YJM789) (Baker's yeast).